Consider the following 405-residue polypeptide: Deoxyguanosinetriphosphate triphosphohydrolase-like protein (405 aa).

Residues 75 to 219 (RLTHTIEVAQ…AAIADDIAYN (145 aa)) form the HD domain.

This sequence belongs to the dGTPase family. Type 2 subfamily.

The protein is Deoxyguanosinetriphosphate triphosphohydrolase-like protein of Rhizobium johnstonii (strain DSM 114642 / LMG 32736 / 3841) (Rhizobium leguminosarum bv. viciae).